The sequence spans 366 residues: tRNA/tmRNA (uracil-C(5))-methyltransferase (366 aa).

Positions 190, 218, 223, 239, and 299 each coordinate S-adenosyl-L-methionine. Cys-324 functions as the Nucleophile in the catalytic mechanism. The Proton acceptor role is filled by Glu-358.

This sequence belongs to the class I-like SAM-binding methyltransferase superfamily. RNA M5U methyltransferase family. TrmA subfamily.

The enzyme catalyses uridine(54) in tRNA + S-adenosyl-L-methionine = 5-methyluridine(54) in tRNA + S-adenosyl-L-homocysteine + H(+). It carries out the reaction uridine(341) in tmRNA + S-adenosyl-L-methionine = 5-methyluridine(341) in tmRNA + S-adenosyl-L-homocysteine + H(+). Its function is as follows. Dual-specificity methyltransferase that catalyzes the formation of 5-methyluridine at position 54 (m5U54) in all tRNAs, and that of position 341 (m5U341) in tmRNA (transfer-mRNA). This is tRNA/tmRNA (uracil-C(5))-methyltransferase from Shigella boydii serotype 18 (strain CDC 3083-94 / BS512).